Reading from the N-terminus, the 155-residue chain is Molybdopterin synthase catalytic subunit (155 aa).

Residues 109-110 (HR), Lys125, and 132-134 (KKE) contribute to the substrate site.

This sequence belongs to the MoaE family. MOCS2B subfamily. Heterotetramer; composed of 2 small (MOCS2A) and 2 large (MOCS2B) subunits.

The protein resides in the cytoplasm. It localises to the cytosol. The catalysed reaction is 2 [molybdopterin-synthase sulfur-carrier protein]-C-terminal-Gly-aminoethanethioate + cyclic pyranopterin phosphate + H2O = molybdopterin + 2 [molybdopterin-synthase sulfur-carrier protein]-C-terminal Gly-Gly + 2 H(+). It functions in the pathway cofactor biosynthesis; molybdopterin biosynthesis. Its function is as follows. Catalytic subunit of the molybdopterin synthase complex, a complex that catalyzes the conversion of precursor Z into molybdopterin. Acts by mediating the incorporation of 2 sulfur atoms from thiocarboxylated MOCS2A into precursor Z to generate a dithiolene group. The sequence is that of Molybdopterin synthase catalytic subunit from Taeniopygia guttata (Zebra finch).